Consider the following 129-residue polypeptide: MLLDPLADAMSTIKNAENVGKPECIIKPASKLIAMTLKVMADLGYIGEFEFIDDGKSGMFKVKLLGRINRCGVIKPRFAIKVAELEKWERRFLPARNFGVLILSTSQGVMPHTDARARGIGGHLLAYVY.

Belongs to the universal ribosomal protein uS8 family. In terms of assembly, part of the 30S ribosomal subunit.

One of the primary rRNA binding proteins, it binds directly to 16S rRNA central domain where it helps coordinate assembly of the platform of the 30S subunit. The protein is Small ribosomal subunit protein uS8 of Methanothrix thermoacetophila (strain DSM 6194 / JCM 14653 / NBRC 101360 / PT) (Methanosaeta thermophila).